We begin with the raw amino-acid sequence, 239 residues long: Ubiquinone biosynthesis O-methyltransferase (239 aa).

S-adenosyl-L-methionine is bound by residues arginine 44, glycine 63, aspartate 84, and methionine 128.

This sequence belongs to the methyltransferase superfamily. UbiG/COQ3 family.

The enzyme catalyses a 3-demethylubiquinol + S-adenosyl-L-methionine = a ubiquinol + S-adenosyl-L-homocysteine + H(+). It catalyses the reaction a 3-(all-trans-polyprenyl)benzene-1,2-diol + S-adenosyl-L-methionine = a 2-methoxy-6-(all-trans-polyprenyl)phenol + S-adenosyl-L-homocysteine + H(+). It participates in cofactor biosynthesis; ubiquinone biosynthesis. Its function is as follows. O-methyltransferase that catalyzes the 2 O-methylation steps in the ubiquinone biosynthetic pathway. In Xanthomonas axonopodis pv. citri (strain 306), this protein is Ubiquinone biosynthesis O-methyltransferase.